We begin with the raw amino-acid sequence, 163 residues long: Disulfide bond formation protein B 1 (163 aa).

The Cytoplasmic portion of the chain corresponds to methionine 1–leucine 9. The helical transmembrane segment at phenylalanine 10 to tyrosine 26 threads the bilayer. Topologically, residues leucine 27–isoleucine 44 are periplasmic. Cysteines 36 and 39 form a disulfide. Residues phenylalanine 45–proline 61 traverse the membrane as a helical segment. Residues glycine 62 to arginine 67 lie on the Cytoplasmic side of the membrane. A helical transmembrane segment spans residues isoleucine 68–alanine 85. Residues arginine 86–glutamate 142 lie on the Periplasmic side of the membrane. A disulfide bridge links cysteine 101 with cysteine 128. A helical transmembrane segment spans residues tryptophan 143–arginine 161. The Cytoplasmic segment spans residues arginine 162–alanine 163.

Belongs to the DsbB family.

The protein resides in the cell inner membrane. Required for disulfide bond formation in some periplasmic proteins. Acts by oxidizing the DsbA protein. The polypeptide is Disulfide bond formation protein B 1 (dsbB1) (Pseudomonas aeruginosa (strain ATCC 15692 / DSM 22644 / CIP 104116 / JCM 14847 / LMG 12228 / 1C / PRS 101 / PAO1)).